The chain runs to 308 residues: Taste receptor type 2 member 10 (308 aa).

Residues 1–6 (MLSVVE) lie on the Extracellular side of the membrane. A helical membrane pass occupies residues 7–27 (GIFIFVVISESVFGVLGNGFI). The Cytoplasmic segment spans residues 28-42 (GLVNCIDCAKNKLST). The chain crosses the membrane as a helical span at residues 43–63 (IGFILTGLAISRIFLIWVIIT). Residues 64-100 (DGFIQIFSPDIYASGNLIEYISYIWVIGNQSSMWFAT) are Extracellular-facing. N92 carries N-linked (GlcNAc...) asparagine glycosylation. A helical transmembrane segment spans residues 101–121 (SLSIFYFLKIANFSNYIFLWL). The Cytoplasmic segment spans residues 122 to 126 (KSRTN). The helical transmembrane segment at 127 to 147 (MVLPFMMAFLLISSLLNFAHI) threads the bilayer. At 148-179 (VKILNDHKMKNDTVWHLNMYKSEYFIKQILLN) the chain is on the extracellular side. N158 carries an N-linked (GlcNAc...) asparagine glycan. The chain crosses the membrane as a helical span at residues 180-200 (LGVIFFFTLSLITCVLLIISL). At 201–227 (WRHNRQMQSNVTGLRDSNTEAHVKAMK) the chain is on the cytoplasmic side. Residues 228 to 248 (VLISFIILFILYFIGMALEIS) traverse the membrane as a helical segment. Residues 249-257 (RFTVPENKL) lie on the Extracellular side of the membrane. The chain crosses the membrane as a helical span at residues 258 to 278 (LLMFGMTTTAIYPWGHSFILI). Residues 279 to 308 (LGNSKLKQASLRVLQQLKCCEKRKKSQSHI) lie on the Cytoplasmic side of the membrane.

It belongs to the G-protein coupled receptor T2R family.

It localises to the membrane. Receptor that may play a role in the perception of bitterness and is gustducin-linked. May play a role in sensing the chemical composition of the gastrointestinal content. The activity of this receptor may stimulate alpha gustducin, mediate PLC-beta-2 activation and lead to the gating of TRPM5. This Pongo pygmaeus (Bornean orangutan) protein is Taste receptor type 2 member 10 (TAS2R10).